The primary structure comprises 351 residues: L-threonine 3-dehydrogenase (351 aa).

Cys39 is a binding site for Zn(2+). Catalysis depends on charge relay system residues Thr41 and His44. Zn(2+) contacts are provided by His64, Glu65, Cys94, Cys97, Cys100, and Cys108. NAD(+)-binding positions include Ile176, Asp196, Arg201, 271 to 273 (LGI), and 295 to 296 (IY).

This sequence belongs to the zinc-containing alcohol dehydrogenase family. Homotetramer. Requires Zn(2+) as cofactor.

Its subcellular location is the cytoplasm. It catalyses the reaction L-threonine + NAD(+) = (2S)-2-amino-3-oxobutanoate + NADH + H(+). The protein operates within amino-acid degradation; L-threonine degradation via oxydo-reductase pathway; glycine from L-threonine: step 1/2. Its function is as follows. Catalyzes the NAD(+)-dependent oxidation of L-threonine to 2-amino-3-ketobutyrate. The chain is L-threonine 3-dehydrogenase from Francisella philomiragia subsp. philomiragia (strain ATCC 25017 / CCUG 19701 / FSC 153 / O#319-036).